A 531-amino-acid chain; its full sequence is Achacin (531 aa).

A signal peptide spans 1–22; sequence MLLLNSALFILCLVCWLPGTSS. Positions 23–29 are excised as a propeptide; the sequence is SRVLTRR. Asn-112, Asn-150, Asn-308, and Asn-392 each carry an N-linked (GlcNAc...) asparagine glycan.

To A.kurodai aplysianin-A. Homodimer. In terms of tissue distribution, collar tissue.

Antibacterial glycoprotein. The protein is Achacin of Lissachatina fulica (Giant African land snail).